A 647-amino-acid chain; its full sequence is Beta-galactosidase (647 aa).

Residues 1-24 (MLRVPLCTPLPLLALLQLLGAAHG) form the signal peptide. Positions 25-29 (IYNVT) are excised as a propeptide. Asn27 is a glycosylation site (N-linked (GlcNAc...) asparagine). Substrate is bound by residues Tyr84, Glu130, and Asn188. Glu189 serves as the catalytic Proton donor. Residues Cys196 and Cys231 are joined by a disulfide bond. N-linked (GlcNAc...) asparagine glycosylation is present at Asn248. Residue Glu269 is the Nucleophile of the active site. Tyr334 lines the substrate pocket. Residues Asn500, Asn504, Asn510, Asn544, Asn557, and Asn617 are each glycosylated (N-linked (GlcNAc...) asparagine). Cys628 and Cys636 form a disulfide bridge.

It belongs to the glycosyl hydrolase 35 family. As to quaternary structure, homodimer. May form higher multimers.

The protein resides in the lysosome. The catalysed reaction is Hydrolysis of terminal non-reducing beta-D-galactose residues in beta-D-galactosides.. In terms of biological role, cleaves beta-linked terminal galactosyl residues from gangliosides, glycoproteins, and glycosaminoglycans. This chain is Beta-galactosidase (Glb1), found in Mus musculus (Mouse).